The primary structure comprises 423 residues: COP9 signalosome complex subunit 3 (423 aa).

Residues Asn-197–Glu-365 enclose the PCI domain. The interval Gln-402–Ser-423 is disordered.

This sequence belongs to the CSN3 family. As to quaternary structure, component of the CSN complex, probably composed of cops1, cops2, cops3, cops4, cops5, cops6, cops7, cops8 and cops9.

The protein resides in the cytoplasm. It is found in the nucleus. Functionally, component of the COP9 signalosome complex (CSN), a complex involved in various cellular and developmental processes. The CSN complex is an essential regulator of the ubiquitin (Ubl) conjugation pathway by mediating the deneddylation of the cullin subunits of E3 ligase complexes, leading to modify the Ubl ligase activity. This chain is COP9 signalosome complex subunit 3 (cops3), found in Danio rerio (Zebrafish).